The chain runs to 377 residues: Succinyl-diaminopimelate desuccinylase (377 aa).

Residue His-71 coordinates Zn(2+). Asp-73 is an active-site residue. Asp-102 provides a ligand contact to Zn(2+). The active-site Proton acceptor is the Glu-132. Residues Glu-133, Glu-161, and His-346 each coordinate Zn(2+).

It belongs to the peptidase M20A family. DapE subfamily. As to quaternary structure, homodimer. Zn(2+) is required as a cofactor. Requires Co(2+) as cofactor.

It carries out the reaction N-succinyl-(2S,6S)-2,6-diaminopimelate + H2O = (2S,6S)-2,6-diaminopimelate + succinate. It functions in the pathway amino-acid biosynthesis; L-lysine biosynthesis via DAP pathway; LL-2,6-diaminopimelate from (S)-tetrahydrodipicolinate (succinylase route): step 3/3. In terms of biological role, catalyzes the hydrolysis of N-succinyl-L,L-diaminopimelic acid (SDAP), forming succinate and LL-2,6-diaminopimelate (DAP), an intermediate involved in the bacterial biosynthesis of lysine and meso-diaminopimelic acid, an essential component of bacterial cell walls. This chain is Succinyl-diaminopimelate desuccinylase, found in Rhizorhabdus wittichii (strain DSM 6014 / CCUG 31198 / JCM 15750 / NBRC 105917 / EY 4224 / RW1) (Sphingomonas wittichii).